The sequence spans 213 residues: Superoxide dismutase [Fe] (213 aa).

Fe cation-binding residues include His28, His82, Asp164, and His168.

Belongs to the iron/manganese superoxide dismutase family. In terms of assembly, homotetramer. Fe cation is required as a cofactor.

The enzyme catalyses 2 superoxide + 2 H(+) = H2O2 + O2. Its function is as follows. Destroys superoxide anion radicals which are normally produced within the cells and which are toxic to biological systems. The chain is Superoxide dismutase [Fe] (sodB) from Aquifex pyrophilus.